The chain runs to 462 residues: CD-NTase-associated protein 4 (462 aa).

Residues methionine 1 to glutamate 226 form an N-terminal endonuclease domain region. Residues aspartate 50, glutamate 67, and lysine 69 contribute to the active site. Aspartate 50 serves as a coordination point for Mg(2+). Residues aspartate 235–leucine 462 are C-terminal SAVED domain. 2',3',3'-c-tri-AMP is bound by residues lysine 299–arginine 301, tryptophan 449, and tyrosine 454.

Belongs to the Cap4 nuclease family. In terms of assembly, a monomer in the absence of ligand, in its presence it forms oligomers. The cofactor is a divalent metal cation.

With respect to regulation, DNase activity is activated upon ligand binding. Inhibited by EDTA. Functionally, effector DNase of a CBASS antivirus system. CBASS (cyclic oligonucleotide-based antiphage signaling system) provides immunity against bacteriophage. The CD-NTase protein synthesizes cyclic nucleotides in response to infection; these serve as specific second messenger signals. The signals activate a diverse range of effectors, leading to bacterial cell death and thus abortive phage infection. A type II-C(AAAA) CBASS system. Its function is as follows. Binds cyclic nucleotide second messengers (synthesized by CdnD, the cognate CD-NTase in the CBASS operon). Ligand binding activates it to endonucleolytically degrade dsDNA to approximately 6 bp length fragments, with a preference for 5'-C or 5'-G cleavage site. The minor product of CdnD is the activating nucleotide; also binds the major product (2',3',3'-cyclic AMP-AMP-AMP) but is not activated by it. Only binds DNA in the presence of ligand. Is not activated by c-di-AMP, c-di-GMP, 3'3'-cyclic GMP-AMP (3'3'-cGAMP) or 3',3',3'-cyclic AMP-AMP-GMP. The protein is CD-NTase-associated protein 4 of Acinetobacter sp. (strain ATCC 27244 / 9458).